The primary structure comprises 447 residues: NADP-specific glutamate dehydrogenase (447 aa).

Positions 92, 113, and 116 each coordinate substrate. Lys-128 acts as the Proton donor in catalysis. Gly-167 lines the substrate pocket. Residues Thr-212 and Asn-243 each contribute to the NADP(+) site. Ser-379 contacts substrate.

The protein belongs to the Glu/Leu/Phe/Val dehydrogenases family. In terms of assembly, homohexamer.

It catalyses the reaction L-glutamate + NADP(+) + H2O = 2-oxoglutarate + NH4(+) + NADPH + H(+). Catalyzes the reversible oxidative deamination of glutamate to alpha-ketoglutarate and ammonia. In Corynebacterium efficiens (strain DSM 44549 / YS-314 / AJ 12310 / JCM 11189 / NBRC 100395), this protein is NADP-specific glutamate dehydrogenase (gdh).